Consider the following 315-residue polypeptide: MRRGEARMTGKHVAVLMGGFSSERSVSLSSGVACATTLEECGYRVTRIDVDRNVASILVELKPDVVFNALHGPFGEDGAIQGVLEYLQIPYTHSGVLASALAMDKDRAKKVAAAAGVVVAPSRLMNRFDIGSQHPMKPPYVVKPVREGSSFGVVIVKEDQPHPPQVIGSADWKYGDEVMVEGYIAGRELTCAVMGDRAMDVCEIMPVGYQFYDYDSKYVAGASTHVCPAKILPNIYQKIQTMALTAHRAIGCRGVSRSDFRFDDRFSEEGEVVWLEINTQPGMTPTSLVPDIAKAAGISFAELLSWMVEDASCLR.

The ATP-grasp domain occupies 109-309 (KKVAAAAGVV…FAELLSWMVE (201 aa)). Residue 135 to 190 (PMKPPYVVKPVREGSSFGVVIVKEDQPHPPQVIGSADWKYGDEVMVEGYIAGRELT) participates in ATP binding. Mg(2+)-binding residues include D259, E276, and N278.

This sequence belongs to the D-alanine--D-alanine ligase family. Mg(2+) serves as cofactor. Mn(2+) is required as a cofactor.

The protein resides in the cytoplasm. The catalysed reaction is 2 D-alanine + ATP = D-alanyl-D-alanine + ADP + phosphate + H(+). Its pathway is cell wall biogenesis; peptidoglycan biosynthesis. Functionally, cell wall formation. The sequence is that of D-alanine--D-alanine ligase B from Brucella melitensis biotype 1 (strain ATCC 23456 / CCUG 17765 / NCTC 10094 / 16M).